A 255-amino-acid polypeptide reads, in one-letter code: Thiazole synthase (255 aa).

The active-site Schiff-base intermediate with DXP is the Lys-97. Residues Gly-158, 184–185 (AG), and 206–207 (NT) each bind 1-deoxy-D-xylulose 5-phosphate.

Belongs to the ThiG family. In terms of assembly, homotetramer. Forms heterodimers with either ThiH or ThiS.

It is found in the cytoplasm. The catalysed reaction is [ThiS sulfur-carrier protein]-C-terminal-Gly-aminoethanethioate + 2-iminoacetate + 1-deoxy-D-xylulose 5-phosphate = [ThiS sulfur-carrier protein]-C-terminal Gly-Gly + 2-[(2R,5Z)-2-carboxy-4-methylthiazol-5(2H)-ylidene]ethyl phosphate + 2 H2O + H(+). Its pathway is cofactor biosynthesis; thiamine diphosphate biosynthesis. In terms of biological role, catalyzes the rearrangement of 1-deoxy-D-xylulose 5-phosphate (DXP) to produce the thiazole phosphate moiety of thiamine. Sulfur is provided by the thiocarboxylate moiety of the carrier protein ThiS. In vitro, sulfur can be provided by H(2)S. This is Thiazole synthase from Moorella thermoacetica (strain ATCC 39073 / JCM 9320).